A 253-amino-acid polypeptide reads, in one-letter code: Tyrosine recombinase XerD-like (253 aa).

The 74-residue stretch at 8 to 81 (KQLTTQITNF…AVNQFLLYLY (74 aa)) folds into the Core-binding (CB) domain. Residues 93-253 (SETAPLPSQQ…PVTLEKYYKT (161 aa)) enclose the Tyr recombinase domain. Catalysis depends on residues Lys157 and Arg218. Tyr250 functions as the O-(3'-phospho-DNA)-tyrosine intermediate in the catalytic mechanism.

Belongs to the 'phage' integrase family. XerD-like subfamily.

Its subcellular location is the cytoplasm. Putative tyrosine recombinase. Not involved in the cutting and rejoining of the recombining DNA molecules on dif(SL) site. This chain is Tyrosine recombinase XerD-like, found in Streptococcus thermophilus (strain CNRZ 1066).